The sequence spans 619 residues: MPEYRSKTSTHGRNMAGARALWRATGVMETDFGKPIIAVANSFTQFVPGHVHLHNMGQLVAREIEKAGAIAKEFNTIAIDDGIAMGHSGMLYSLPSRDLIADSIEYMVNAHCADALVCISNCDKITPGMLIAAMRLNIPTIFVSGGPMEAGKVIGVANIQPERRLDLIDAMIESADDNVSNRQVEEVEQNACPTCGSCSGMFTANSMNCLTEALGLSLPGNGSYLATHAGRKELFLEAGRMIVEITKRYYEQDDETVLPRSIATKKAFENAMTMDIAMGGSTNTILHLLAVANEAGVDFKMADIDRLSRVVPCICKTAPNNHDYYMEDVHRAGGIFAILKELDKAGKLHTDVYTIHAPTLKDAIEKWDVTNPENTRAIERFKAAPGGVRTTQAFSQNRIWKTLDLDREKGCIRDVAHAYSQDGGLAVLFGNIAERGCVVKTAGVDESILKFTGRARVFESQEAAVEGILGNQIVAGNIVIIRYEGPKGGPGMQEMLYPTSYLKSKGLGKACALLTDGRFSGGTSGLSIGHASPEAAEGGAIGLVHEGDTIEIDIPKRSIRLVISDEELAARRAEMEARGSKAWKPENRDRYVSAALRAYGAMATSADKGAVRDVSQIER.

Asp81 contributes to the Mg(2+) binding site. A [2Fe-2S] cluster-binding site is contributed by Cys122. Residues Asp123 and Lys124 each coordinate Mg(2+). Lys124 carries the post-translational modification N6-carboxylysine. Cys198 is a binding site for [2Fe-2S] cluster. Residue Glu494 coordinates Mg(2+). Ser520 (proton acceptor) is an active-site residue.

Belongs to the IlvD/Edd family. As to quaternary structure, homodimer. The cofactor is [2Fe-2S] cluster. It depends on Mg(2+) as a cofactor.

It catalyses the reaction (2R)-2,3-dihydroxy-3-methylbutanoate = 3-methyl-2-oxobutanoate + H2O. The enzyme catalyses (2R,3R)-2,3-dihydroxy-3-methylpentanoate = (S)-3-methyl-2-oxopentanoate + H2O. It participates in amino-acid biosynthesis; L-isoleucine biosynthesis; L-isoleucine from 2-oxobutanoate: step 3/4. It functions in the pathway amino-acid biosynthesis; L-valine biosynthesis; L-valine from pyruvate: step 3/4. In terms of biological role, functions in the biosynthesis of branched-chain amino acids. Catalyzes the dehydration of (2R,3R)-2,3-dihydroxy-3-methylpentanoate (2,3-dihydroxy-3-methylvalerate) into 2-oxo-3-methylpentanoate (2-oxo-3-methylvalerate) and of (2R)-2,3-dihydroxy-3-methylbutanoate (2,3-dihydroxyisovalerate) into 2-oxo-3-methylbutanoate (2-oxoisovalerate), the penultimate precursor to L-isoleucine and L-valine, respectively. The protein is Dihydroxy-acid dehydratase of Neisseria gonorrhoeae (strain ATCC 700825 / FA 1090).